Reading from the N-terminus, the 288-residue chain is MHFLSPAKLNLFLQILGRREDDFHEIVTRYQAIAFGDQLSLSISSRDSLQVINACHLETPSNSIWKSVALFRRYTGITTPVSWRVVKQIPVGAGLAGGSSNAATALFALNQIFKTGLSDEEMRSLAEQLGVDTPFFFSTGAALGVARGEKIIALEESVSDRYVLYFSSEGVLTSRAFAAVQPSDCSSRKNLEYTQNDLEKPVFRLRLDLKEKKHWLENLWAELPVHIGLTGSGATLFVRYPEILEEDLSYAAQIQRAVTLSGGLLTSPIRRDPTAWYSIYSESALAAT.

Lysine 8 is a catalytic residue. 90-100 (PVGAGLAGGSS) is an ATP binding site. Residue aspartate 132 is part of the active site.

The protein belongs to the GHMP kinase family. IspE subfamily.

It carries out the reaction 4-CDP-2-C-methyl-D-erythritol + ATP = 4-CDP-2-C-methyl-D-erythritol 2-phosphate + ADP + H(+). The protein operates within isoprenoid biosynthesis; isopentenyl diphosphate biosynthesis via DXP pathway; isopentenyl diphosphate from 1-deoxy-D-xylulose 5-phosphate: step 3/6. In terms of biological role, catalyzes the phosphorylation of the position 2 hydroxy group of 4-diphosphocytidyl-2C-methyl-D-erythritol. The polypeptide is 4-diphosphocytidyl-2-C-methyl-D-erythritol kinase (Chlamydia trachomatis serovar D (strain ATCC VR-885 / DSM 19411 / UW-3/Cx)).